A 90-amino-acid chain; its full sequence is Putative antitoxin VapB8 (90 aa).

The segment at 1-56 is disordered; that stretch reads MEKSRCHAVAHGGGCAGSAKSHKSGGRCGQGRGAGDSHGTRGAGRRYRAASAPHPL. A compositionally biased stretch (gly residues) spans 26-36; the sequence is GRCGQGRGAGD.

Antitoxin component of a possible type II toxin-antitoxin (TA) system. The cognate toxin is VapC8. The sequence is that of Putative antitoxin VapB8 (vapB8) from Mycobacterium tuberculosis (strain ATCC 25618 / H37Rv).